The following is a 418-amino-acid chain: Glutamyl-tRNA reductase (418 aa).

Residues 49-52, S107, 112-114, and Q118 each bind substrate; these read TCNR and EPQ. Catalysis depends on C50, which acts as the Nucleophile. 187 to 192 contributes to the NADP(+) binding site; the sequence is GAGETI.

Belongs to the glutamyl-tRNA reductase family. Homodimer.

It carries out the reaction (S)-4-amino-5-oxopentanoate + tRNA(Glu) + NADP(+) = L-glutamyl-tRNA(Glu) + NADPH + H(+). Its pathway is porphyrin-containing compound metabolism; protoporphyrin-IX biosynthesis; 5-aminolevulinate from L-glutamyl-tRNA(Glu): step 1/2. In terms of biological role, catalyzes the NADPH-dependent reduction of glutamyl-tRNA(Glu) to glutamate 1-semialdehyde (GSA). The chain is Glutamyl-tRNA reductase from Pseudoalteromonas translucida (strain TAC 125).